Here is a 442-residue protein sequence, read N- to C-terminus: tRNA modification GTPase MnmE (442 aa).

3 residues coordinate (6S)-5-formyl-5,6,7,8-tetrahydrofolate: Arg24, Glu82, and Lys120. One can recognise a TrmE-type G domain in the interval 217–367; the sequence is GLHIVITGEP…LVSVIKEKVE (151 aa). Residues 227–232, 246–252, and 271–274 contribute to the GTP site; these read NVGKST, SEYVGTT, and DTAG. Mg(2+) is bound by residues Ser231 and Thr252. Lys442 provides a ligand contact to (6S)-5-formyl-5,6,7,8-tetrahydrofolate.

This sequence belongs to the TRAFAC class TrmE-Era-EngA-EngB-Septin-like GTPase superfamily. TrmE GTPase family. As to quaternary structure, homodimer. Heterotetramer of two MnmE and two MnmG subunits. It depends on K(+) as a cofactor.

The protein resides in the cytoplasm. In terms of biological role, exhibits a very high intrinsic GTPase hydrolysis rate. Involved in the addition of a carboxymethylaminomethyl (cmnm) group at the wobble position (U34) of certain tRNAs, forming tRNA-cmnm(5)s(2)U34. This Wolbachia sp. subsp. Brugia malayi (strain TRS) protein is tRNA modification GTPase MnmE.